The primary structure comprises 89 residues: Small ribosomal subunit protein uS14A (89 aa).

Belongs to the universal ribosomal protein uS14 family. In terms of assembly, part of the 30S ribosomal subunit. Contacts proteins S3 and S10.

Binds 16S rRNA, required for the assembly of 30S particles and may also be responsible for determining the conformation of the 16S rRNA at the A site. This is Small ribosomal subunit protein uS14A from Lactiplantibacillus plantarum (strain ATCC BAA-793 / NCIMB 8826 / WCFS1) (Lactobacillus plantarum).